The chain runs to 498 residues: MSNENHEELNDQLIVRREKVDTLREEGIDPFGEKFIRSISPEEIETKFADKSKEELEEAAIEVSVAGRIMTKRVKGKVGFTHIQDRFHQLQIYIRKDAIGEDAYAIFKLADLGDIIGIKGTIFRTNTGELSVKATDFTLLSKSLRPLPDKYHGLKDVEQRYRQRYLDLITNEESQNRFVMRSKILKYTRDYMDSQGFLEVETPVLHTIAGGAAAKPFITHHNALDMELYLRIALELHLKRLIVGGMDKVYEIGRVFRNEGTSTRHNPEFTMLESYAAYEDYEDVMDLVEGLVSTVCKQVNGTTEITYGEYKVDLTPNWRRVHMADVVKEYVGVDFWNVTSDEEARELAKKHDVAITEHMTYGHILNEFFETYVEEKLIQPTFVYGHPVEISPLAKKNKEDERFTDRFELFIVGREHANAFSELNDPIDQRERFEAQMKEREQGNDEAHGMDADFLEALEYGLPPTGGLGIGVDRLVMLLTDAPSIRDILLFPTMKHRD.

Residues Glu408 and Glu415 each coordinate Mg(2+).

Belongs to the class-II aminoacyl-tRNA synthetase family. As to quaternary structure, homodimer. Requires Mg(2+) as cofactor.

It is found in the cytoplasm. It catalyses the reaction tRNA(Lys) + L-lysine + ATP = L-lysyl-tRNA(Lys) + AMP + diphosphate. The sequence is that of Lysine--tRNA ligase from Listeria welshimeri serovar 6b (strain ATCC 35897 / DSM 20650 / CCUG 15529 / CIP 8149 / NCTC 11857 / SLCC 5334 / V8).